Reading from the N-terminus, the 197-residue chain is ATP-dependent Clp protease proteolytic subunit (197 aa).

Residue S98 is the Nucleophile of the active site. The active site involves H123.

Belongs to the peptidase S14 family. Fourteen ClpP subunits assemble into 2 heptameric rings which stack back to back to give a disk-like structure with a central cavity, resembling the structure of eukaryotic proteasomes.

Its subcellular location is the cytoplasm. It carries out the reaction Hydrolysis of proteins to small peptides in the presence of ATP and magnesium. alpha-casein is the usual test substrate. In the absence of ATP, only oligopeptides shorter than five residues are hydrolyzed (such as succinyl-Leu-Tyr-|-NHMec, and Leu-Tyr-Leu-|-Tyr-Trp, in which cleavage of the -Tyr-|-Leu- and -Tyr-|-Trp bonds also occurs).. In terms of biological role, cleaves peptides in various proteins in a process that requires ATP hydrolysis. Has a chymotrypsin-like activity. Plays a major role in the degradation of misfolded proteins. The chain is ATP-dependent Clp protease proteolytic subunit from Ligilactobacillus salivarius (strain UCC118) (Lactobacillus salivarius).